We begin with the raw amino-acid sequence, 425 residues long: UPF0597 protein KPN78578_43500 (425 aa).

Belongs to the UPF0597 family.

This Klebsiella pneumoniae subsp. pneumoniae (strain ATCC 700721 / MGH 78578) protein is UPF0597 protein KPN78578_43500.